A 260-amino-acid polypeptide reads, in one-letter code: Cytosolic Fe-S cluster assembly factor Nubp2 homolog (260 aa).

An ATP-binding site is contributed by 14 to 21; that stretch reads GKGGVGKS. Cysteine 188 and cysteine 191 together coordinate [4Fe-4S] cluster.

Belongs to the Mrp/NBP35 ATP-binding proteins family. NUBP2/CFD1 subfamily. As to quaternary structure, heterotetramer of 2 Nubp1 and 2 Nubp2 chains. [4Fe-4S] cluster is required as a cofactor.

The protein resides in the cytoplasm. Functionally, component of the cytosolic iron-sulfur (Fe/S) protein assembly (CIA) machinery. Required for maturation of extramitochondrial Fe-S proteins. The Nubp1-Nubp2 heterotetramer forms a Fe-S scaffold complex, mediating the de novo assembly of an Fe-S cluster and its transfer to target apoproteins. This Drosophila sechellia (Fruit fly) protein is Cytosolic Fe-S cluster assembly factor Nubp2 homolog.